Reading from the N-terminus, the 690-residue chain is Long-chain fatty acid transport protein 5 (690 aa).

At 1–30 (MGVRQQLALLLLLLLLLWGLGQPVWPVAVA) the chain is on the cytoplasmic side. The next 2 membrane-spanning stretches (helical) occupy residues 31–51 (LTLR…LAML) and 56–76 (LGPW…LTLL). Topologically, residues 77–690 (PARLPPGLRW…QAVCEGTWRL (614 aa)) are cytoplasmic. 292 to 303 (FIYTSGTTGLPK) is an AMP binding site. Phosphoserine is present on Ser501.

This sequence belongs to the ATP-dependent AMP-binding enzyme family. Predominantly expressed in liver.

It is found in the endoplasmic reticulum membrane. Its subcellular location is the microsome. The protein resides in the cell membrane. The catalysed reaction is a fatty acid(in) = a fatty acid(out). It catalyses the reaction cholate + ATP + CoA = choloyl-CoA + AMP + diphosphate. The enzyme catalyses chenodeoxycholate + ATP + CoA = chenodeoxycholoyl-CoA + AMP + diphosphate. It carries out the reaction deoxycholate + ATP + CoA = deoxycholoyl-CoA + AMP + diphosphate. The catalysed reaction is lithocholate + ATP + CoA = lithocholoyl-CoA + AMP + diphosphate. It catalyses the reaction (25R)-3alpha,7alpha,12alpha-trihydroxy-5beta-cholestan-26-oate + ATP + CoA = (25R)-3alpha,7alpha,12alpha-trihydroxy-5beta-cholestan-26-oyl-CoA + AMP + diphosphate. The enzyme catalyses a very long-chain fatty acid + ATP + CoA = a very long-chain fatty acyl-CoA + AMP + diphosphate. It carries out the reaction tetracosanoate + ATP + CoA = tetracosanoyl-CoA + AMP + diphosphate. The catalysed reaction is hexacosanoate + ATP + CoA = hexacosanoyl-CoA + AMP + diphosphate. It catalyses the reaction a long-chain fatty acid + ATP + CoA = a long-chain fatty acyl-CoA + AMP + diphosphate. The enzyme catalyses octadecanoate + ATP + CoA = octadecanoyl-CoA + AMP + diphosphate. It carries out the reaction eicosanoate + ATP + CoA = eicosanoyl-CoA + AMP + diphosphate. Its activity is regulated as follows. 3-alpha,7-alpha,12-alpha-trihydroxy-5-beta-cholestanate (THCA) inhibits the activation of cholate. Functionally, may mediate the import of long-chain fatty acids (LCFA) by facilitating their transport across cell membranes. Also catalyzes the ATP-dependent formation of fatty acyl-CoA using LCFA and very-long-chain fatty acids (VLCFA) as substrates. Mainly functions as a bile acyl-CoA synthetase catalyzing the activation of bile acids via ATP-dependent formation of bile acid CoA thioesters which is necessary for their subsequent conjugation with glycine or taurine. Both primary bile acids (cholic acid and chenodeoxycholic acid) and secondary bile acids (deoxycholic acid and lithocholic acid) are the principal substrates. In vitro, activates 3-alpha,7-alpha,12-alpha-trihydroxy-5-beta-cholestanate ((25R)-3alpha,7alpha,12alpha-trihydroxy-5beta-cholestan-26-oate or THCA), the C27 precursor of cholic acid deriving from the de novo synthesis from cholesterol. Plays an important role in hepatic fatty acid uptake and bile acid reconjugation and recycling but not in de novo synthesis of bile acids. The chain is Long-chain fatty acid transport protein 5 (SLC27A5) from Homo sapiens (Human).